The following is a 372-amino-acid chain: Embryonic growth/differentiation factor 1 (372 aa).

The N-terminal stretch at 1–29 is a signal peptide; that stretch reads MPPPQQGPCGHHLLLLLALLLPSLPLTRA. The propeptide occupies 30 to 253; that stretch reads PVPPGPAAAL…LCHPLARPRR (224 aa). Residues 67-86 form a disordered region; it reads RRRDPQETRSGSRRTSPGVT. Asn206 carries N-linked (GlcNAc...) asparagine glycosylation. 3 disulfides stabilise this stretch: Cys267-Cys337, Cys296-Cys369, and Cys300-Cys371.

Belongs to the TGF-beta family. Homodimer; disulfide-linked. As to expression, expressed in the brain.

The protein resides in the secreted. Functionally, may mediate cell differentiation events during embryonic development. The sequence is that of Embryonic growth/differentiation factor 1 (GDF1) from Homo sapiens (Human).